The primary structure comprises 193 residues: MTNSETLAMFKSSGALLDGHFKLTSGRHSNSYFQCAKVLQYPEYLSAICGEIAAHFRDSGITTVISPAIGGIVVGTEVGRQLGVKTIFAERKEGTMMIRRGFSIDPSEQVLVVEDVITTGGSVVEVMEQVKAAGATVAGVASVVDRSNGKVKLADKQFSLLMMEVVSYAPEECPLCKEGLPIDAPGSRSNAQG.

114–122 (EDVITTGGS) serves as a coordination point for 5-phospho-alpha-D-ribose 1-diphosphate. Orotate-binding residues include Thr118 and Arg146.

It belongs to the purine/pyrimidine phosphoribosyltransferase family. PyrE subfamily. Homodimer. The cofactor is Mg(2+).

It catalyses the reaction orotidine 5'-phosphate + diphosphate = orotate + 5-phospho-alpha-D-ribose 1-diphosphate. It participates in pyrimidine metabolism; UMP biosynthesis via de novo pathway; UMP from orotate: step 1/2. Catalyzes the transfer of a ribosyl phosphate group from 5-phosphoribose 1-diphosphate to orotate, leading to the formation of orotidine monophosphate (OMP). This is Orotate phosphoribosyltransferase from Chlorobaculum parvum (strain DSM 263 / NCIMB 8327) (Chlorobium vibrioforme subsp. thiosulfatophilum).